Consider the following 317-residue polypeptide: Ret finger protein-like 3 (317 aa).

Residues 40-82 form an RING-type zinc finger; sequence CPVCSDYLEKPMSLECGCTVCLKCINSLQKEPHGEDLLCCCCS. The B30.2/SPRY domain occupies 107–301; the sequence is EPKLKKILQM…DQGVLSICPL (195 aa).

In terms of tissue distribution, expressed during neurogenesis in differentiating human embryonic stem cells and in the developing human neocortex.

Its subcellular location is the cytoplasm. It is found in the nucleus. (Microbial infection) Stimulates the activity of Human Immunodeficiency Virus 1/HIV-1 pre-integration complex. This Homo sapiens (Human) protein is Ret finger protein-like 3 (RFPL3).